Consider the following 80-residue polypeptide: MAKENRTVKKVTTIQKTQVSSKHNTVSVTLVKSFHGRLPSHRETIVGLGLKRINHTKKFKDTSEIRGMINKVSYLLKVEN.

This sequence belongs to the universal ribosomal protein uL30 family. As to quaternary structure, part of the 50S ribosomal subunit.

This Vesicomyosocius okutanii subsp. Calyptogena okutanii (strain HA) protein is Large ribosomal subunit protein uL30.